Consider the following 121-residue polypeptide: uncharacterized protein (121 aa).

A disordered region spans residues 85–111 (NANNDDYESPYKTPKIKSNPSLDSSGS). Residues 100–111 (IKSNPSLDSSGS) show a composition bias toward polar residues.

This is an uncharacterized protein from Dictyostelium discoideum (Social amoeba).